The sequence spans 377 residues: Homoserine O-acetyltransferase (377 aa).

The AB hydrolase-1 domain maps to Asn-48–Glu-347. The Nucleophile role is filled by Ser-143. Arg-213 contributes to the substrate binding site. Residues Asp-311 and His-341 contribute to the active site. Asp-342 provides a ligand contact to substrate.

The protein belongs to the AB hydrolase superfamily. MetX family. Homodimer.

The protein resides in the cytoplasm. It carries out the reaction L-homoserine + acetyl-CoA = O-acetyl-L-homoserine + CoA. It participates in amino-acid biosynthesis; L-methionine biosynthesis via de novo pathway; O-acetyl-L-homoserine from L-homoserine: step 1/1. Transfers an acetyl group from acetyl-CoA to L-homoserine, forming acetyl-L-homoserine. This chain is Homoserine O-acetyltransferase, found in Corynebacterium glutamicum (strain ATCC 13032 / DSM 20300 / JCM 1318 / BCRC 11384 / CCUG 27702 / LMG 3730 / NBRC 12168 / NCIMB 10025 / NRRL B-2784 / 534).